The sequence spans 335 residues: Transaldolase (335 aa).

Lys135 (schiff-base intermediate with substrate) is an active-site residue.

It belongs to the transaldolase family. Type 1 subfamily. In terms of assembly, homodimer.

It is found in the cytoplasm. It carries out the reaction D-sedoheptulose 7-phosphate + D-glyceraldehyde 3-phosphate = D-erythrose 4-phosphate + beta-D-fructose 6-phosphate. The protein operates within carbohydrate degradation; pentose phosphate pathway; D-glyceraldehyde 3-phosphate and beta-D-fructose 6-phosphate from D-ribose 5-phosphate and D-xylulose 5-phosphate (non-oxidative stage): step 2/3. Its function is as follows. Transaldolase is important for the balance of metabolites in the pentose-phosphate pathway. This is Transaldolase from Prochlorococcus marinus (strain SARG / CCMP1375 / SS120).